An 83-amino-acid polypeptide reads, in one-letter code: Small ribosomal subunit protein uS17 (83 aa).

The protein belongs to the universal ribosomal protein uS17 family. As to quaternary structure, part of the 30S ribosomal subunit.

Functionally, one of the primary rRNA binding proteins, it binds specifically to the 5'-end of 16S ribosomal RNA. This Francisella tularensis subsp. holarctica (strain FTNF002-00 / FTA) protein is Small ribosomal subunit protein uS17.